Reading from the N-terminus, the 777-residue chain is Ethylene receptor 4 (777 aa).

A run of 3 helical transmembrane segments spans residues 49-69, 77-97, and 113-133; these read LLIA…ATCA, AVLH…LAAF, and AAKV…LTFI. Cu cation-binding residues include C88 and H92. One can recognise a GAF domain in the interval 184–344; sequence DAHAILRTTA…VVADQAAVAL (161 aa). The 135-residue stretch at 387-521 folds into the Histidine kinase domain; it reads AMCHAMRRPV…NTESGACRLS (135 aa). H390 is modified (phosphohistidine; by autocatalysis). The 130-residue stretch at 645 to 774 folds into the Response regulatory domain; that stretch reads RVLLADDDAM…ALGAQLCRVL (130 aa). D696 carries the post-translational modification 4-aspartylphosphate.

The protein belongs to the ethylene receptor family. Cu cation is required as a cofactor.

The protein localises to the endoplasmic reticulum membrane. The catalysed reaction is ATP + protein L-histidine = ADP + protein N-phospho-L-histidine.. Ethylene receptor related to bacterial two-component regulators. Acts as a redundant negative regulator of ethylene signaling. The polypeptide is Ethylene receptor 4 (Oryza sativa subsp. indica (Rice)).